A 555-amino-acid polypeptide reads, in one-letter code: Alpha-1,2-mannosyltransferase ALG9 (555 aa).

Residues 1–7 (MNCKAVT) lie on the Cytoplasmic side of the membrane. The chain crosses the membrane as a helical span at residues 8-28 (ISLLLLLFLTRVYIQPTFSLI). At 29-62 (SDCDETFNYWEPLNLLVRGFGKQTWEYSPEYSIR) the chain is on the lumenal side. A helical membrane pass occupies residues 63 to 83 (SWAFLLPFYCILYPVNKFTDL). At 84–86 (ESH) the chain is on the cytoplasmic side. Residues 87–107 (WNFFITRACLGFFSFIMEFKL) traverse the membrane as a helical segment. Topologically, residues 108–113 (HREIAG) are lumenal. The chain crosses the membrane as a helical span at residues 114–134 (SLALQIANIWIIFQLFNPGWF). At 135-176 (HASVELLPSAVAMLLYVGATRHSLRYLSTGSTSNFTKSLAYN) the chain is on the cytoplasmic side. The helical transmembrane segment at 177 to 197 (FLASILGWPFVLILSLPLCLH) threads the bilayer. Over 198-213 (YLFNHRIISTIRTAFD) the chain is Lumenal. The chain crosses the membrane as a helical span at residues 214-234 (CCLIFSLTAFAVIVTDSIFYG). Residues 235–268 (KLAPVSWNILFYNVINASEESGPNIFGVEPWYYY) are Cytoplasmic-facing. A helical membrane pass occupies residues 269–289 (PLNLLLNFPLPVLVLAILGIF). Residues 290-316 (HLRLWPLWASLFTWIAVFTQQPHKEER) are Lumenal-facing. Residues 317–337 (FLYPIYGLITLSASIAFYKVL) form a helical membrane-spanning segment. Topologically, residues 338–349 (NLFNRKPILKKG) are cytoplasmic. Residues 350–370 (IKLSVLLIVAGQAMSRIVALV) traverse the membrane as a helical segment. Topologically, residues 371 to 555 (NNYTAPIAVY…LFEKPTETTN (185 aa)) are lumenal.

Belongs to the glycosyltransferase 22 family.

Its subcellular location is the endoplasmic reticulum membrane. It catalyses the reaction an alpha-D-Man-(1-&gt;2)-alpha-D-Man-(1-&gt;2)-alpha-D-Man-(1-&gt;3)-[alpha-D-Man-(1-&gt;3)-alpha-D-Man-(1-&gt;6)]-beta-D-Man-(1-&gt;4)-beta-D-GlcNAc-(1-&gt;4)-alpha-D-GlcNAc-diphospho-di-trans,poly-cis-dolichol + a di-trans,poly-cis-dolichyl beta-D-mannosyl phosphate = an alpha-D-Man-(1-&gt;2)-alpha-D-Man-(1-&gt;2)-alpha-D-Man-(1-&gt;3)-[alpha-D-Man-(1-&gt;2)-alpha-D-Man-(1-&gt;3)-alpha-D-Man-(1-&gt;6)]-beta-D-Man-(1-&gt;4)-beta-D-GlcNAc-(1-&gt;4)-alpha-D-GlcNAc-diphospho-di-trans,poly-cis-dolichol + a di-trans,poly-cis-dolichyl phosphate + H(+). The enzyme catalyses an alpha-D-Man-(1-&gt;2)-alpha-D-Man-(1-&gt;2)-alpha-D-Man-(1-&gt;3)-[alpha-D-Man-(1-&gt;2)-alpha-D-Man-(1-&gt;3)-[alpha-D-Man-(1-&gt;6)]-alpha-D-Man-(1-&gt;6)]-beta-D-Man-(1-&gt;4)-beta-D-GlcNAc-(1-&gt;4)-alpha-D-GlcNAc-diphospho-di-trans,poly-cis-dolichol + a di-trans,poly-cis-dolichyl beta-D-mannosyl phosphate = an alpha-D-Man-(1-&gt;2)-alpha-D-Man-(1-&gt;2)-alpha-D-Man-(1-&gt;3)-[alpha-D-Man-(1-&gt;2)-alpha-D-Man-(1-&gt;3)-[alpha-D-Man-(1-&gt;2)-alpha-D-Man-(1-&gt;6)]-alpha-D-Man-(1-&gt;6)]-beta-D-Man-(1-&gt;4)-beta-D-GlcNAc-(1-&gt;4)-alpha-D-GlcNAc-diphospho-di-trans,poly-cis-dolichol + a di-trans,poly-cis-dolichyl phosphate + H(+). It participates in protein modification; protein glycosylation. Mannosyltransferase that operates in the biosynthetic pathway of dolichol-linked oligosaccharides, the glycan precursors employed in protein asparagine (N)-glycosylation. The assembly of dolichol-linked oligosaccharides begins on the cytosolic side of the endoplasmic reticulum membrane and finishes in its lumen. The sequential addition of sugars to dolichol pyrophosphate produces dolichol-linked oligosaccharides containing fourteen sugars, including two GlcNAcs, nine mannoses and three glucoses. Once assembled, the oligosaccharide is transferred from the lipid to nascent proteins by oligosaccharyltransferases. In the lumen of the endoplasmic reticulum, catalyzes the addition of the seventh and ninth alpha-1,2-linked mannose residues to Man(6)GlcNAc(2)-PP-dolichol and Man(8)GlcNAc(2)-PP-dolichol respectively. This is Alpha-1,2-mannosyltransferase ALG9 (ALG9) from Saccharomyces cerevisiae (strain ATCC 204508 / S288c) (Baker's yeast).